The primary structure comprises 69 residues: Conotoxin LvVID (69 aa).

The signal sequence occupies residues 1 to 17; it reads VLIIAVLFLTACQLTTA. A propeptide spanning residues 18 to 40 is cleaved from the precursor; the sequence is ETYPRGQQRHHALRSTDKNSKLT. 3 disulfide bridges follow: Cys43-Cys57, Cys50-Cys61, and Cys56-Cys68.

The protein belongs to the conotoxin O1 superfamily. Expressed by the venom duct.

It is found in the secreted. This Conus lividus (Livid cone) protein is Conotoxin LvVID.